The sequence spans 203 residues: Large ribosomal subunit protein bL25 (203 aa).

The protein belongs to the bacterial ribosomal protein bL25 family. CTC subfamily. As to quaternary structure, part of the 50S ribosomal subunit; part of the 5S rRNA/L5/L18/L25 subcomplex. Contacts the 5S rRNA. Binds to the 5S rRNA independently of L5 and L18.

Functionally, this is one of the proteins that binds to the 5S RNA in the ribosome where it forms part of the central protuberance. The polypeptide is Large ribosomal subunit protein bL25 (Cereibacter sphaeroides (strain ATCC 17029 / ATH 2.4.9) (Rhodobacter sphaeroides)).